The chain runs to 374 residues: Histidinol-phosphate aminotransferase (374 aa).

An N6-(pyridoxal phosphate)lysine modification is found at K215.

The protein belongs to the class-II pyridoxal-phosphate-dependent aminotransferase family. Histidinol-phosphate aminotransferase subfamily. In terms of assembly, homodimer. Pyridoxal 5'-phosphate is required as a cofactor.

The enzyme catalyses L-histidinol phosphate + 2-oxoglutarate = 3-(imidazol-4-yl)-2-oxopropyl phosphate + L-glutamate. It functions in the pathway amino-acid biosynthesis; L-histidine biosynthesis; L-histidine from 5-phospho-alpha-D-ribose 1-diphosphate: step 7/9. The polypeptide is Histidinol-phosphate aminotransferase (Yersinia enterocolitica serotype O:8 / biotype 1B (strain NCTC 13174 / 8081)).